Consider the following 593-residue polypeptide: Calnexin (593 aa).

An N-terminal signal peptide occupies residues M1–A20. Over H21–P482 the chain is Lumenal. Residues S75 and D118 each coordinate Ca(2+). K138 is subject to N6-acetyllysine. Cysteines 161 and 195 form a disulfide. An alpha-D-glucoside-binding residues include Y165, K167, Y186, and D193. The interval G261–D346 is disordered. The interval I277–E410 is p domain (Extended arm). 5 consecutive repeat copies span residues D279 to E290, D296 to E307, D315 to D326, D334 to E345, and G349 to P359. 4 X approximate repeats regions lie at residues D279 to E345 and G349 to P406. A compositionally biased stretch (basic and acidic residues) spans D282–K320. The span at W324–D346 shows a compositional bias: acidic residues. Positions D327–K360 are interaction with PPIB. C361 and C367 are disulfide-bonded. Tandem repeats lie at residues G368–P378, G382–P392, and G396–P406. E426 contacts an alpha-D-glucoside. D437 is a binding site for Ca(2+). Residues W483 to C503 form a helical membrane-spanning segment. S-palmitoyl cysteine attachment occurs at residues C503 and C504. Residues C504 to E593 are Cytoplasmic-facing. The tract at residues C504 to E593 is sufficient to mediate interaction with SGIP1. The segment at S511–E593 is disordered. Acidic residues predominate over residues K526–K548. The residue at position 555 (S555) is a Phosphoserine. T563 carries the post-translational modification Phosphothreonine. A Phosphoserine; by MAPK3 modification is found at S565. Phosphoserine is present on S584.

Belongs to the calreticulin family. Interacts with MAPK3/ERK1. Interacts with KCNH2. Associates with ribosomes. Interacts with SGIP1; involved in negative regulation of endocytosis. The palmitoylated form interacts with the ribosome-translocon complex component SSR1, promoting efficient folding of glycoproteins. Interacts with SERPINA2P/SERPINA2 and with the S and Z variants of SERPINA1. Interacts with PPIB. Interacts with ZNRF4. Interacts with SMIM22. Interacts with TMX2. Interacts with TMEM35A/NACHO and CHRNA7. Interacts with reticulophagy regulators RETREG2 and RETREG3. Interacts with DNM1L; may form part of a larger protein complex at the ER-mitochondrial interface during mitochondrial fission. Interacts with ADAM7. Phosphorylated at Ser-565 by MAPK3/ERK1. Phosphorylation by MAPK3/ERK1 increases its association with ribosomes. In terms of processing, palmitoylation by DHHC6 leads to the preferential localization to the perinuclear rough ER. It mediates the association of calnexin with the ribosome-translocon complex (RTC) which is required for efficient folding of glycosylated proteins. Post-translationally, ubiquitinated, leading to proteasomal degradation. Probably ubiquitinated by ZNRF4.

It is found in the endoplasmic reticulum membrane. The protein localises to the mitochondrion membrane. The protein resides in the melanosome membrane. Its function is as follows. Calcium-binding protein that interacts with newly synthesized monoglucosylated glycoproteins in the endoplasmic reticulum. It may act in assisting protein assembly and/or in the retention within the ER of unassembled protein subunits. It seems to play a major role in the quality control apparatus of the ER by the retention of incorrectly folded proteins. Associated with partial T-cell antigen receptor complexes that escape the ER of immature thymocytes, it may function as a signaling complex regulating thymocyte maturation. Additionally it may play a role in receptor-mediated endocytosis at the synapse. The protein is Calnexin (CANX) of Canis lupus familiaris (Dog).